The primary structure comprises 540 residues: MAAKEVKFHDHARTRIVQGVNVLADAVKVTLAPRAVMCLIERSFGAPVITKDGVSVAKEIELQDKFENMGAQMVKQVASKTADIAGDGTTTATVLAQAIVQEGMKHVVAGVNPMDLKRGIDKAVATVVDELHKLSKPITTNKEIAQVGSISANSDHPIGKIIADAMDKVGKEGVITVEDGKSLDNELDVVEGMQFDRGYLSPYFINNPEKQTVEFDDPLILLYDKKISSIRDLLPTLENVAKAGKPLLIIAEDLEGEALATLVVNSMRGILKVAAVKAPGFGDRRKAMLEDIAILTGATVISEETGKQLEKASLEDLGRAKRVELQKENTIIIDGAGEQKAIEARVKAIQAQIDESTSDYDREKLQERVAKLSGGVAVIKVGAATEVEMKEKKDRVDDALHATRAAVEEGIVPGGGVALLRARSRIVNLKGDNGDQDAGIRIVLRAIEAPLRAIAANAGDEPSVVINKVLAGSGNFGYNAATGEYADLVETGVVDPTKVTRTALQNAASVASLILTTDASIAELPKEEKAAVPAMPDMGY.

Residues 30 to 33, lysine 51, 87 to 91, glycine 415, 479 to 481, and aspartate 495 each bind ATP; these read TLAP, DGTTT, and NAA.

This sequence belongs to the chaperonin (HSP60) family. In terms of assembly, forms a cylinder of 14 subunits composed of two heptameric rings stacked back-to-back. Interacts with the co-chaperonin GroES.

The protein resides in the cytoplasm. It carries out the reaction ATP + H2O + a folded polypeptide = ADP + phosphate + an unfolded polypeptide.. Functionally, together with its co-chaperonin GroES, plays an essential role in assisting protein folding. The GroEL-GroES system forms a nano-cage that allows encapsulation of the non-native substrate proteins and provides a physical environment optimized to promote and accelerate protein folding. The protein is Chaperonin GroEL of Methylovorus sp. (strain SS1 / DSM 11726).